The sequence spans 122 residues: Large ribosomal subunit protein uL14 (122 aa).

It belongs to the universal ribosomal protein uL14 family. Part of the 50S ribosomal subunit. Forms a cluster with proteins L3 and L19. In the 70S ribosome, L14 and L19 interact and together make contacts with the 16S rRNA in bridges B5 and B8.

Binds to 23S rRNA. Forms part of two intersubunit bridges in the 70S ribosome. The sequence is that of Large ribosomal subunit protein uL14 from Oenococcus oeni (strain ATCC BAA-331 / PSU-1).